The primary structure comprises 55 residues: Large ribosomal subunit protein bL33 (55 aa).

Belongs to the bacterial ribosomal protein bL33 family. In terms of assembly, part of the 50S ribosomal subunit. Contacts protein L35.

Binds the 23S rRNA and the E site tRNA. This Deinococcus radiodurans (strain ATCC 13939 / DSM 20539 / JCM 16871 / CCUG 27074 / LMG 4051 / NBRC 15346 / NCIMB 9279 / VKM B-1422 / R1) protein is Large ribosomal subunit protein bL33 (rpmG).